Consider the following 886-residue polypeptide: DNA repair and recombination protein RAD54B (886 aa).

Residues 1 to 12 (MRRSAAPSQVQG) show a composition bias toward polar residues. The interval 1 to 95 (MRRSAAPSQV…ASKEITESKA (95 aa)) is disordered. S14 is subject to Phosphoserine. The span at 47-62 (AEQSQNDPGVCSSNPC) shows a compositional bias: polar residues. 2 stretches are compositionally biased toward basic and acidic residues: residues 67-76 (IPREVGDGTR) and 86-95 (ASKEITESKA). Residues 291–458 (GMRAVGKCGA…FALVDFVNPG (168 aa)) form the Helicase ATP-binding domain. 304–311 (DEMGLGKT) lines the ATP pocket. Positions 409–412 (DEGH) match the DEGH box motif. Residues 627-788 (KLLAVIHELR…HIQFSVEELK (162 aa)) form the Helicase C-terminal domain.

The protein belongs to the SNF2/RAD54 helicase family. Interacts with RAD51 through the NH2-terminal domain.

It is found in the nucleus. Involved in DNA repair and mitotic recombination. May play an active role in recombination processes in concert with other members of the RAD52 epistasis group. The chain is DNA repair and recombination protein RAD54B (Rad54b) from Mus musculus (Mouse).